The primary structure comprises 251 residues: Triosephosphate isomerase (251 aa).

9-11 (NWK) contributes to the substrate binding site. His95 serves as the catalytic Electrophile. Catalysis depends on Glu167, which acts as the Proton acceptor. Residues Gly173, Ser212, and 233 to 234 (GG) each bind substrate.

The protein belongs to the triosephosphate isomerase family. As to quaternary structure, homodimer.

It localises to the cytoplasm. The catalysed reaction is D-glyceraldehyde 3-phosphate = dihydroxyacetone phosphate. The protein operates within carbohydrate biosynthesis; gluconeogenesis. It participates in carbohydrate degradation; glycolysis; D-glyceraldehyde 3-phosphate from glycerone phosphate: step 1/1. Its function is as follows. Involved in the gluconeogenesis. Catalyzes stereospecifically the conversion of dihydroxyacetone phosphate (DHAP) to D-glyceraldehyde-3-phosphate (G3P). The sequence is that of Triosephosphate isomerase from Pseudomonas fluorescens (strain ATCC BAA-477 / NRRL B-23932 / Pf-5).